A 407-amino-acid polypeptide reads, in one-letter code: Peptidase T (407 aa).

His78 lines the Zn(2+) pocket. Asp80 is a catalytic residue. A Zn(2+)-binding site is contributed by Asp141. The active-site Proton acceptor is Glu175. Glu176, Asp198, and His380 together coordinate Zn(2+).

It belongs to the peptidase M20B family. Requires Zn(2+) as cofactor.

It is found in the cytoplasm. The enzyme catalyses Release of the N-terminal residue from a tripeptide.. Functionally, cleaves the N-terminal amino acid of tripeptides. The sequence is that of Peptidase T from Clostridium novyi (strain NT).